The chain runs to 426 residues: Enolase 2 (426 aa).

Gln-163 is a binding site for (2R)-2-phosphoglycerate. Glu-205 acts as the Proton donor in catalysis. 3 residues coordinate Mg(2+): Asp-242, Glu-285, and Asp-312. (2R)-2-phosphoglycerate is bound by residues Lys-337, Arg-366, Ser-367, and Lys-388. Residue Lys-337 is the Proton acceptor of the active site.

The protein belongs to the enolase family. Mg(2+) is required as a cofactor.

Its subcellular location is the cytoplasm. The protein localises to the secreted. The protein resides in the cell surface. The enzyme catalyses (2R)-2-phosphoglycerate = phosphoenolpyruvate + H2O. The protein operates within carbohydrate degradation; glycolysis; pyruvate from D-glyceraldehyde 3-phosphate: step 4/5. In terms of biological role, catalyzes the reversible conversion of 2-phosphoglycerate (2-PG) into phosphoenolpyruvate (PEP). It is essential for the degradation of carbohydrates via glycolysis. The protein is Enolase 2 of Methanospirillum hungatei JF-1 (strain ATCC 27890 / DSM 864 / NBRC 100397 / JF-1).